The sequence spans 346 residues: WD repeat-containing protein LWD1 (346 aa).

Position 1 is an N-acetylmethionine (methionine 1). 4 WD repeats span residues 79–121 (EHPY…SRVE), 133–173 (EFCG…VDTQ), 176–214 (AHDKEVFDIAWGGVGVFASVSADGSVRVFDLRDKEHSTI), and 265–305 (RHQA…QHVE).

Its subcellular location is the nucleus. Its function is as follows. Clock protein essential for the proper expression phase and period length of both the oscillator and output genes known to participate in photoperiod sensing. Required for the expression of APRR9, APRR7, and APRR5. Regulated by APRR9 and APRR7 at the transcriptional level, indicating the existence of a positive feedback loop within the circadian clock. May function to delay the expression of the morning genes until dawn approaches. This chain is WD repeat-containing protein LWD1 (LWD1), found in Arabidopsis thaliana (Mouse-ear cress).